We begin with the raw amino-acid sequence, 315 residues long: Gamma-hemolysin component C (315 aa).

The first 29 residues, 1-29 (MLKNKILATTLSVSLLAPLANPLLENAKA), serve as a signal peptide directing secretion.

It belongs to the aerolysin family. In terms of assembly, toxicity requires sequential binding and synergistic association of a class S and a class F component which form heterooligomeric complexes. HlgC (class S) associates with HlgB (class F) thus forming an CB toxin.

Functionally, toxin that seems to act by forming pores in the membrane of the cell. Has a hemolytic and a leucotoxic activity. This chain is Gamma-hemolysin component C (hlgC), found in Staphylococcus aureus (strain Mu50 / ATCC 700699).